The sequence spans 201 residues: Nucleoid occlusion factor SlmA (201 aa).

Residues 14 to 75 (KERQQQVLEV…ALIERIEMTL (62 aa)) form the HTH tetR-type domain. The segment at residues 38 to 57 (TTERLSKAVGVSEGALYRYF) is a DNA-binding region (H-T-H motif).

This sequence belongs to the nucleoid occlusion factor SlmA family. Homodimer. Interacts with FtsZ.

Its subcellular location is the cytoplasm. It localises to the nucleoid. Its function is as follows. Required for nucleoid occlusion (NO) phenomenon, which prevents Z-ring formation and cell division over the nucleoid. Acts as a DNA-associated cell division inhibitor that binds simultaneously chromosomal DNA and FtsZ, and disrupts the assembly of FtsZ polymers. SlmA-DNA-binding sequences (SBS) are dispersed on non-Ter regions of the chromosome, preventing FtsZ polymerization at these regions. In Glaesserella parasuis serovar 5 (strain SH0165) (Haemophilus parasuis), this protein is Nucleoid occlusion factor SlmA.